The chain runs to 416 residues: Putative F-box/kelch-repeat protein At1g12870 (416 aa).

The F-box domain occupies 27–76; it reads MIASSSLPDDVVEEIFLKLPVKALMRFKSLSKQWRSTLESCYFSQRHLKI. Kelch repeat units lie at residues 199–243 and 297–341; these read LVWL…PASA and CMYE…HVLD.

The protein is Putative F-box/kelch-repeat protein At1g12870 of Arabidopsis thaliana (Mouse-ear cress).